The chain runs to 228 residues: Urease accessory protein UreE (228 aa).

The interval 193 to 228 is disordered; sequence HGSGLHIHGIHSHGDGHSHSHDDHDHDHNHDHDHKH. Residues 204-228 show a composition bias toward basic and acidic residues; it reads SHGDGHSHSHDDHDHDHNHDHDHKH.

It belongs to the UreE family.

The protein resides in the cytoplasm. Involved in urease metallocenter assembly. Binds nickel. Probably functions as a nickel donor during metallocenter assembly. In Yersinia rohdei, this protein is Urease accessory protein UreE.